Consider the following 962-residue polypeptide: Glycine dehydrogenase (decarboxylating) (962 aa).

Position 709 is an N6-(pyridoxal phosphate)lysine (K709).

This sequence belongs to the GcvP family. In terms of assembly, the glycine cleavage system is composed of four proteins: P, T, L and H. It depends on pyridoxal 5'-phosphate as a cofactor.

It carries out the reaction N(6)-[(R)-lipoyl]-L-lysyl-[glycine-cleavage complex H protein] + glycine + H(+) = N(6)-[(R)-S(8)-aminomethyldihydrolipoyl]-L-lysyl-[glycine-cleavage complex H protein] + CO2. In terms of biological role, the glycine cleavage system catalyzes the degradation of glycine. The P protein binds the alpha-amino group of glycine through its pyridoxal phosphate cofactor; CO(2) is released and the remaining methylamine moiety is then transferred to the lipoamide cofactor of the H protein. The protein is Glycine dehydrogenase (decarboxylating) of Shewanella baltica (strain OS155 / ATCC BAA-1091).